The following is a 345-amino-acid chain: S-adenosylmethionine:tRNA ribosyltransferase-isomerase (345 aa).

It belongs to the QueA family. As to quaternary structure, monomer.

The protein localises to the cytoplasm. The enzyme catalyses 7-aminomethyl-7-carbaguanosine(34) in tRNA + S-adenosyl-L-methionine = epoxyqueuosine(34) in tRNA + adenine + L-methionine + 2 H(+). It functions in the pathway tRNA modification; tRNA-queuosine biosynthesis. In terms of biological role, transfers and isomerizes the ribose moiety from AdoMet to the 7-aminomethyl group of 7-deazaguanine (preQ1-tRNA) to give epoxyqueuosine (oQ-tRNA). The protein is S-adenosylmethionine:tRNA ribosyltransferase-isomerase of Shewanella baltica (strain OS155 / ATCC BAA-1091).